A 256-amino-acid chain; its full sequence is DNA repair protein RecO (256 aa).

It belongs to the RecO family.

Functionally, involved in DNA repair and RecF pathway recombination. The chain is DNA repair protein RecO from Streptococcus pneumoniae serotype 19F (strain G54).